Reading from the N-terminus, the 507-residue chain is Maturase K (507 aa).

This sequence belongs to the intron maturase 2 family. MatK subfamily.

It localises to the plastid. It is found in the chloroplast. Usually encoded in the trnK tRNA gene intron. Probably assists in splicing its own and other chloroplast group II introns. The protein is Maturase K of Annona muricata (Soursop).